The following is a 371-amino-acid chain: Cytochrome b (371 aa).

Helical transmembrane passes span 25 to 45 (FGSMLLSCLMLQVTTGFFLAV), 69 to 90 (WMMQNTHAIGASLFFICIYIHI), 105 to 125 (WMSGTTLLITLMATAFFGYIL), and 170 to 190 (FFALHFILPFIIISLSSLHIL). His75 and His89 together coordinate heme b. Residues His174 and His188 each contribute to the heme b site. Residue His193 coordinates a ubiquinone. 4 helical membrane-spanning segments follow: residues 218 to 238 (YKDLLLLTLLLTLLLLTTFFL), 280 to 300 (LGGALALVASILIIMTMPFTH), 312 to 332 (MSQLMFWTLISTFMTITWAAT), and 339 to 358 (FMMISQTASMIYFMFFISNP).

It belongs to the cytochrome b family. In terms of assembly, the cytochrome bc1 complex contains 3 respiratory subunits (MT-CYB, CYC1 and UQCRFS1), 2 core proteins (UQCRC1 and UQCRC2) and probably 6 low-molecular weight proteins. Heme b serves as cofactor.

The protein resides in the mitochondrion inner membrane. Functionally, component of the ubiquinol-cytochrome c reductase complex (complex III or cytochrome b-c1 complex) that is part of the mitochondrial respiratory chain. The b-c1 complex mediates electron transfer from ubiquinol to cytochrome c. Contributes to the generation of a proton gradient across the mitochondrial membrane that is then used for ATP synthesis. The chain is Cytochrome b (MT-CYB) from Casarea dussumieri (Round Island keel-scaled boa).